The sequence spans 453 residues: MNEGQEMEEQFALLLETLKNQQMNEFRELFLALHIYEQGQFYQSLDEKDRQHLYNYLSPKELADMFDVIEEDNENMKDYLAEMRPSYAADMLAEMYTDNAVDLLNMLDKSQKAKYLSLLSSEEAGEIKELLHYEDETAGAIMTTEFVSIVANQTVRSAMYVLKNQADMAETIYYVYVVDQENHLVGVISLRDLIVNDDDTLIADILNERVISVHVGDDQEDVAQTIRDYDFLAVPVTDYDDHLLGIVTVDDIIDVIDDEAASDYSGLAGVDVEEVSENPLKAASKRLPWLITLLFLGMSTASLISNYESLVSEASILAVFISLITGTAGNAGTQSLAVAVRRLAMKDEKDSNFGRLILSEVLTGLVTGAVTGLTIMIVVGVWQHNLPLGFVIGMAMLCAITVANLAGSLIPMLMDKLGFDPAVASGPFITTLSDLTSVLIYFNIASMFMRYFV.

Residues 1-286 (MNEGQEMEEQ…ENPLKAASKR (286 aa)) lie on the Cytoplasmic side of the membrane. Residues Glu-71, Asp-98, Asp-102, Glu-136, Ala-140, Tyr-176, Arg-227, Asp-230, Ala-233, Asp-251, and Glu-259 each coordinate Mg(2+). CBS domains lie at 142–205 (MTTE…IADI) and 206–262 (LNER…EAAS). Residues 287 to 307 (LPWLITLLFLGMSTASLISNY) form a helical membrane-spanning segment. Residue Glu-308 is a topological domain, extracellular. Residues 309–329 (SLVSEASILAVFISLITGTAG) traverse the membrane as a helical segment. Over 330–360 (NAGTQSLAVAVRRLAMKDEKDSNFGRLILSE) the chain is Cytoplasmic. Residues 361-381 (VLTGLVTGAVTGLTIMIVVGV) form a helical membrane-spanning segment. Over 382–389 (WQHNLPLG) the chain is Extracellular. Residues 390 to 410 (FVIGMAMLCAITVANLAGSLI) form a helical membrane-spanning segment. Residues 411–427 (PMLMDKLGFDPAVASGP) lie on the Cytoplasmic side of the membrane. The chain crosses the membrane as a helical span at residues 428–448 (FITTLSDLTSVLIYFNIASMF). Asp-434 serves as a coordination point for Mg(2+). The Extracellular segment spans residues 449-453 (MRYFV).

Belongs to the SLC41A transporter family. In terms of assembly, homodimer.

It localises to the cell membrane. It catalyses the reaction Mg(2+)(in) = Mg(2+)(out). Its function is as follows. Acts as a magnesium transporter. The protein is Magnesium transporter MgtE of Enterococcus faecalis (strain ATCC 700802 / V583).